A 297-amino-acid chain; its full sequence is L-ribulose 3-epimerase (297 aa).

The Proton donor/acceptor role is filled by glutamate 147. A Mn(2+)-binding site is contributed by glutamate 147. Substrate-binding positions include glutamate 153 and 180–183 (DTFH). Residues aspartate 180 and histidine 206 each coordinate Mn(2+). Arginine 212 lines the substrate pocket. Catalysis depends on glutamate 241, which acts as the Proton donor/acceptor. Glutamate 241 serves as a coordination point for Mn(2+).

It belongs to the hyi family. As to quaternary structure, homotetramer. Requires Mn(2+) as cofactor.

The catalysed reaction is L-ribulose = L-xylulose. The enzyme catalyses keto-D-tagatose = keto-D-sorbose. It catalyses the reaction D-allulose = keto-D-fructose. With respect to regulation, strongly inhibited by Co(2+) and Ni(2+), and slightly inhibited by EDTA. Its function is as follows. Catalyzes the epimerization of various ketoses at the C(3) position. It is able to interconvert L-ribulose with high efficiency. The enzyme can also accept other ketopentoses such as D-psicose and D-tagatose with lower efficiency. In Mesorhizobium japonicum (strain LMG 29417 / CECT 9101 / MAFF 303099) (Mesorhizobium loti (strain MAFF 303099)), this protein is L-ribulose 3-epimerase.